The following is a 147-amino-acid chain: Putative pre-16S rRNA nuclease (147 aa).

This sequence belongs to the YqgF nuclease family.

The protein resides in the cytoplasm. Its function is as follows. Could be a nuclease involved in processing of the 5'-end of pre-16S rRNA. This is Putative pre-16S rRNA nuclease from Polynucleobacter necessarius subsp. necessarius (strain STIR1).